A 114-amino-acid chain; its full sequence is Early 4 ORF4 protein (114 aa).

The Nuclear localization signal motif lies at 66-75; that stretch reads RAKRRDRRRR.

Belongs to the adenoviridae E4 ORF4 family. Interacts with host BAZ1A/ACF1, host PPP2R2A/PP2a-B55alpha subunit, and host PPP2R5E/PP2a-B'B56 subunit. May interact with host SRC. May be phosphorylated by host SRC kinase.

Its subcellular location is the host nucleus. It localises to the host cytoplasm. Its function is as follows. Plays a role in viral alternative pre-mRNA splicing. Activates dephosphorylation by protein phosphatase 2A of host SR proteins and converts their splicing properties. When expressed alone ex vivo, induces p53/TP53-independent apoptosis called cytoplasmic death. May mimic nutrient/growth signals to activate the host mTOR pathway. The chain is Early 4 ORF4 protein from Homo sapiens (Human).